We begin with the raw amino-acid sequence, 123 residues long: uncharacterized protein (123 aa).

3 consecutive transmembrane segments (helical) span residues Val7–Val29, Phe44–Ile66, and Leu79–Ala101.

The protein resides in the cell membrane. This is an uncharacterized protein from Bacillus subtilis (strain 168).